The sequence spans 237 residues: 1-(5-phosphoribosyl)-5-[(5-phosphoribosylamino)methylideneamino] imidazole-4-carboxamide isomerase (237 aa).

Asp-8 (proton acceptor) is an active-site residue. Asp-130 acts as the Proton donor in catalysis.

It belongs to the HisA/HisF family.

It is found in the cytoplasm. The enzyme catalyses 1-(5-phospho-beta-D-ribosyl)-5-[(5-phospho-beta-D-ribosylamino)methylideneamino]imidazole-4-carboxamide = 5-[(5-phospho-1-deoxy-D-ribulos-1-ylimino)methylamino]-1-(5-phospho-beta-D-ribosyl)imidazole-4-carboxamide. The protein operates within amino-acid biosynthesis; L-histidine biosynthesis; L-histidine from 5-phospho-alpha-D-ribose 1-diphosphate: step 4/9. The protein is 1-(5-phosphoribosyl)-5-[(5-phosphoribosylamino)methylideneamino] imidazole-4-carboxamide isomerase of Halothermothrix orenii (strain H 168 / OCM 544 / DSM 9562).